Reading from the N-terminus, the 200-residue chain is MTDKLATLQSALEKALGNRIQSLTEAVGEITLVVKAADYLETMRTLRDDATLKFEQLIDLCGVDYSAYGDGAWNGPRFAAVSHLLSVTHNWRVRVRVFAPDDDLPVVASVVDVWNAADWFEREAFDLYGLVFEGHPDLRRILTDYGFIGHPFRKDFPVSGYVEMRYDPVQRRVIYQPVTIEPREITPRVIREDQYGGLKH.

Belongs to the complex I 30 kDa subunit family. As to quaternary structure, NDH-1 is composed of 14 different subunits. Subunits NuoB, C, D, E, F, and G constitute the peripheral sector of the complex.

It is found in the cell inner membrane. The catalysed reaction is a quinone + NADH + 5 H(+)(in) = a quinol + NAD(+) + 4 H(+)(out). NDH-1 shuttles electrons from NADH, via FMN and iron-sulfur (Fe-S) centers, to quinones in the respiratory chain. The immediate electron acceptor for the enzyme in this species is believed to be ubiquinone. Couples the redox reaction to proton translocation (for every two electrons transferred, four hydrogen ions are translocated across the cytoplasmic membrane), and thus conserves the redox energy in a proton gradient. The chain is NADH-quinone oxidoreductase subunit C from Ralstonia nicotianae (strain ATCC BAA-1114 / GMI1000) (Ralstonia solanacearum).